The sequence spans 473 residues: Fumarate hydratase class II (473 aa).

Residues 105-107 (SGT), 130-133 (HPND), 140-142 (SSN), and Thr-188 each bind substrate. The active-site Proton donor/acceptor is the His-189. Ser-319 is a catalytic residue. Residues Ser-320 and 325 to 327 (KVN) each bind substrate.

This sequence belongs to the class-II fumarase/aspartase family. Fumarase subfamily. In terms of assembly, homotetramer.

The protein localises to the cytoplasm. The catalysed reaction is (S)-malate = fumarate + H2O. Its pathway is carbohydrate metabolism; tricarboxylic acid cycle; (S)-malate from fumarate: step 1/1. Functionally, involved in the TCA cycle. Catalyzes the stereospecific interconversion of fumarate to L-malate. The sequence is that of Fumarate hydratase class II from Xylella fastidiosa (strain Temecula1 / ATCC 700964).